Here is a 359-residue protein sequence, read N- to C-terminus: Prostaglandin F2-alpha receptor (359 aa).

The Extracellular segment spans residues 1-31; that stretch reads MSMNNSKQLVSPAAALLSNTTCQTENRLSVF. 2 N-linked (GlcNAc...) asparagine glycosylation sites follow: Asn4 and Asn19. The chain crosses the membrane as a helical span at residues 32-54; it reads FSVIFMTVGILSNSLAIAILMKA. Over 55-69 the chain is Cytoplasmic; the sequence is YQRFRQKSKASFLLL. Residues 70-90 traverse the membrane as a helical segment; sequence ASGLVITDFFGHLINGAIAVF. Over 91–109 the chain is Extracellular; the sequence is VYASDKEWIRFDQSNVLCS. Cys108 and Cys186 are joined by a disulfide. A helical transmembrane segment spans residues 110–131; that stretch reads IFGICMVFSGLCPLLLGSVMAI. The Cytoplasmic portion of the chain corresponds to 132 to 152; that stretch reads ERCIGVTKPIFHSTKITSKHV. A helical membrane pass occupies residues 153–175; that stretch reads KMMLSGVCLFAVFIALLPILGHR. At 176–198 the chain is on the extracellular side; that stretch reads DYKIQASRTWCFYNTEDIKDWED. Residues 199–224 traverse the membrane as a helical segment; sequence RFYLLLFSFLGLLALGVSLLCNAITG. Residues 225-250 lie on the Cytoplasmic side of the membrane; sequence ITLLRVKFKSQQHRQGRSHHLEMVIQ. The helical transmembrane segment at 251 to 267 threads the bilayer; that stretch reads LLAIMCVSCICWSPFLV. Residues 268 to 285 are Extracellular-facing; that stretch reads TMANIGINGNHSLETCET. The helical transmembrane segment at 286-307 threads the bilayer; it reads TLFALRMATWNQILDPWVYILL. The Cytoplasmic segment spans residues 308-359; it reads RKAVLKNLYKLASQCCGVHVISLHIWELSSIKNSLKVAAISESPVAEKSAST.

It belongs to the G-protein coupled receptor 1 family. As to quaternary structure, isoform 1 can form heterodimers with isoform 5 (and probably other isoforms). Eye.

It localises to the cell membrane. Its function is as follows. Receptor for prostaglandin F2-alpha (PGF2-alpha). The activity of this receptor is mediated by G proteins which activate a phosphatidylinositol-calcium second messenger system. Initiates luteolysis in the corpus luteum. Isoforms 2 to 7 do not bind PGF2-alpha but are proposed to modulate signaling by participating in variant receptor complexes; heterodimers between isoform 1 and isoform 5 are proposed to be a receptor for prostamides including the synthetic analog bimatoprost. This is Prostaglandin F2-alpha receptor (PTGFR) from Homo sapiens (Human).